A 196-amino-acid chain; its full sequence is FMN-dependent NADH:quinone oxidoreductase (196 aa).

Ser10 is a binding site for FMN.

The protein belongs to the azoreductase type 1 family. Homodimer. It depends on FMN as a cofactor.

The catalysed reaction is 2 a quinone + NADH + H(+) = 2 a 1,4-benzosemiquinone + NAD(+). The enzyme catalyses N,N-dimethyl-1,4-phenylenediamine + anthranilate + 2 NAD(+) = 2-(4-dimethylaminophenyl)diazenylbenzoate + 2 NADH + 2 H(+). Functionally, quinone reductase that provides resistance to thiol-specific stress caused by electrophilic quinones. Also exhibits azoreductase activity. Catalyzes the reductive cleavage of the azo bond in aromatic azo compounds to the corresponding amines. The chain is FMN-dependent NADH:quinone oxidoreductase from Cereibacter sphaeroides (strain ATCC 17023 / DSM 158 / JCM 6121 / CCUG 31486 / LMG 2827 / NBRC 12203 / NCIMB 8253 / ATH 2.4.1.) (Rhodobacter sphaeroides).